Consider the following 468-residue polypeptide: 3-isopropylmalate dehydratase large subunit (468 aa).

3 residues coordinate [4Fe-4S] cluster: cysteine 347, cysteine 407, and cysteine 410.

The protein belongs to the aconitase/IPM isomerase family. LeuC type 1 subfamily. As to quaternary structure, heterodimer of LeuC and LeuD. The cofactor is [4Fe-4S] cluster.

It catalyses the reaction (2R,3S)-3-isopropylmalate = (2S)-2-isopropylmalate. It functions in the pathway amino-acid biosynthesis; L-leucine biosynthesis; L-leucine from 3-methyl-2-oxobutanoate: step 2/4. Its function is as follows. Catalyzes the isomerization between 2-isopropylmalate and 3-isopropylmalate, via the formation of 2-isopropylmaleate. In Prochlorococcus marinus (strain AS9601), this protein is 3-isopropylmalate dehydratase large subunit.